The following is a 100-amino-acid chain: Small ribosomal subunit protein uS14c (100 aa).

Belongs to the universal ribosomal protein uS14 family. Part of the 30S ribosomal subunit.

The protein localises to the plastid. It localises to the chloroplast. In terms of biological role, binds 16S rRNA, required for the assembly of 30S particles. The protein is Small ribosomal subunit protein uS14c of Aethionema cordifolium (Lebanon stonecress).